A 56-amino-acid chain; its full sequence is Large ribosomal subunit protein bL33 (56 aa).

This sequence belongs to the bacterial ribosomal protein bL33 family.

This is Large ribosomal subunit protein bL33 from Vibrio campbellii (strain ATCC BAA-1116).